The chain runs to 652 residues: Sciellin (652 aa).

The segment covering 1 to 10 (MSNFSSRKKS) has biased composition (basic residues). Disordered stretches follow at residues 1 to 29 (MSNF…QQGF) and 43 to 180 (SWIK…KPLG). The segment covering 66-95 (NSHDALDRKLIERDEPKATISRYRSEDMLD) has biased composition (basic and acidic residues). Position 82 is an N6-acetyllysine (Lys82). The segment covering 97 to 110 (TLSSFRTPQSTKTP) has biased composition (polar residues). The segment covering 111–130 (AVSSFNANTTATASTPATTP) has biased composition (low complexity). Residues 161–170 (LHPPLPPKPC) show a composition bias toward pro residues. A run of 15 repeats spans residues 207 to 226 (TEDL…TDKG), 227 to 241 (EELD…SLNR), 242 to 261 (NQGL…LDKR), 262 to 281 (AQSL…DGKG), 282 to 301 (NQAF…DRRS), 302 to 320 (QDLR…IGRR), 321 to 340 (KQDL…NMKR), 341 to 360 (GKSL…SNKG), 361 to 380 (GPSL…ANQR), 381 to 398 (DQDL…NRSS), 399 to 418 (QHSL…TTAR), 419 to 438 (HQDL…NNQR), 439 to 458 (NHDV…CEQS), 459 to 477 (EELD…NTNG), and 478 to 496 (GQDL…EKNG). The segment at 207-496 (TEDLDDIIRV…VNSHVAEKNG (290 aa)) is 15 X approximate tandem repeats. Ser264 carries the post-translational modification Phosphoserine. Position 343 is a phosphoserine (Ser343). The segment at 353–385 (EVNRSNKGGPSLDNFTKGVPARSRANQRDQDLD) is disordered. The tract at residues 436-455 (NQRNHDVDSTIRGNPTGTRC) is disordered. Residues 446 to 455 (IRGNPTGTRC) show a composition bias toward polar residues. The LIM zinc-binding domain maps to 583-649 (DMCTYCRKPL…EPCYSKVMAK (67 aa)).

Expressed in the upper layers of stratified epithelia, including, ependyma and choroid plexus of the brain ventricles.

Its subcellular location is the cytoplasm. The protein resides in the membrane. In terms of biological role, may function in the assembly or regulation of proteins in the cornified envelope. The LIM domain may be involved in homotypic or heterotypic associations and may function to localize sciellin to the cornified envelope. The polypeptide is Sciellin (Scel) (Mus musculus (Mouse)).